A 298-amino-acid polypeptide reads, in one-letter code: MTSGAAAAGRTPTWKERENNKRRERRRRAIAAKIFTGLRALGNYNLPKHCDNNEVLKALCREAGWVVEDDGTTYRKGCKPPPSSAGGASVGMSPCSSTQLLSAPSSSFPSPVPSYHASPASSSFPSPSRIDNPSASCLLPFLRGLPNLPPLRVSSSAPVTPPLSSPTASRPPKIRKPDWDVDPFRHPFFAVSAPASPTRGRRLEHPDTIPECDESDVSTVDSGRWISFQMATTAPTSPTYNLVNPGASTSNSMEIEGTAGRGGAEFEFDKGRVTPWEGERIHEVAAEELELTLGVGAK.

Disordered regions lie at residues 1–25 (MTSG…RRER), 71–129 (GTTY…SPSR), 153–175 (VSSS…PKIR), and 190–217 (AVSA…ESDV). Positions 10 to 91 (RTPTWKEREN…PSSAGGASVG (82 aa)) are required for DNA-binding. Over residues 96–128 (SSTQLLSAPSSSFPSPVPSYHASPASSSFPSPS) the composition is skewed to low complexity. Ser156 carries the post-translational modification Phosphoserine. A PEST-like region spans residues 204–224 (EHPDTIPECDESDVSTVDSGR).

This sequence belongs to the BZR/LAT61 family. As to quaternary structure, interacts with GF14C. Interacts with PUB24. Interacts with SMOS1. In terms of processing, phosphorylated on serine and threonine residues by GSK2. Dephosphorylated during response to brassinosteroid. Post-translationally, ubiquitinated by PUB24. Ubiquitination leads to its subsequent degradation by the 26S proteasome, thus reducing sensitivity to brassinosteroid signaling.

The protein resides in the nucleus. It localises to the cytoplasm. Its function is as follows. Positive brassinosteroid-signaling protein. Mediates downstream brassinosteroid-regulated growth response and feedback inhibition of brassinosteroid (BR) biosynthetic genes. May act as transcriptional repressor by binding the brassinosteroid-response element (BREE) (5'-CGTG(T/C)G-3') in the promoter of DLT (AC Q9LWU9), another positive regulator of BR signaling. Acts as a transcriptional repressor of LIC, a negative regulator of BR signaling, by binding to the BRRE element of its promoter. BZR1 and LIC play opposite roles in BR signaling and regulation of leaf bending. The polypeptide is Protein BZR1 homolog 1 (Oryza sativa subsp. japonica (Rice)).